We begin with the raw amino-acid sequence, 85 residues long: Small ribosomal subunit protein bS18 (85 aa).

The protein belongs to the bacterial ribosomal protein bS18 family. In terms of assembly, part of the 30S ribosomal subunit. Forms a tight heterodimer with protein bS6.

Its function is as follows. Binds as a heterodimer with protein bS6 to the central domain of the 16S rRNA, where it helps stabilize the platform of the 30S subunit. The polypeptide is Small ribosomal subunit protein bS18 (Hyphomonas neptunium (strain ATCC 15444)).